We begin with the raw amino-acid sequence, 268 residues long: Minor capsid protein VP2 (268 aa).

The span at 132-144 (STPQSLGALTGRT) shows a compositional bias: polar residues. The tract at residues 132-199 (STPQSLGALT…SLSSAARTRS (68 aa)) is disordered. Low complexity predominate over residues 145–163 (NSRVSAPARSSPSALSNAP). Residues 164 to 178 (TATSLHSNQTVSTRL) show a composition bias toward polar residues. A compositionally biased stretch (low complexity) spans 179 to 195 (GSSAGSGTGVSSLSSAA).

The protein belongs to the norovirus VP2 family. In terms of assembly, homooligomer. The portal-like structure consists in 12 copies of VP2. Interacts with capsid protein VP1.

It is found in the virion. Its subcellular location is the host cytoplasm. Functionally, minor structural protein that forms a portal-like structure at a unique three-fold axis of symmetry, following binding to the host receptor. The channel formed by VP2 may allow the delivery of the viral genome through the host endosomal membrane. The protein is Minor capsid protein VP2 of Lordsdale virus (strain GII/Human/United Kingdom/Lordsdale/1993) (Human enteric calicivirus).